Consider the following 503-residue polypeptide: Maturase K (503 aa).

Belongs to the intron maturase 2 family. MatK subfamily.

It localises to the plastid. Its subcellular location is the chloroplast. Usually encoded in the trnK tRNA gene intron. Probably assists in splicing its own and other chloroplast group II introns. The sequence is that of Maturase K from Liquidambar orientalis (Oriental sweet gum).